A 332-amino-acid polypeptide reads, in one-letter code: Ribose-phosphate pyrophosphokinase (332 aa).

ATP is bound at residue Asp-55–Glu-57. The Mg(2+) site is built by His-148 and Asp-187. Lys-211 is an active-site residue. D-ribose 5-phosphate-binding positions include Arg-213, Asp-237, and Asp-241 to Thr-245.

Belongs to the ribose-phosphate pyrophosphokinase family. Class I subfamily. As to quaternary structure, homohexamer. The cofactor is Mg(2+).

It is found in the cytoplasm. The catalysed reaction is D-ribose 5-phosphate + ATP = 5-phospho-alpha-D-ribose 1-diphosphate + AMP + H(+). It functions in the pathway metabolic intermediate biosynthesis; 5-phospho-alpha-D-ribose 1-diphosphate biosynthesis; 5-phospho-alpha-D-ribose 1-diphosphate from D-ribose 5-phosphate (route I): step 1/1. Its function is as follows. Involved in the biosynthesis of the central metabolite phospho-alpha-D-ribosyl-1-pyrophosphate (PRPP) via the transfer of pyrophosphoryl group from ATP to 1-hydroxyl of ribose-5-phosphate (Rib-5-P). This chain is Ribose-phosphate pyrophosphokinase, found in Prochlorococcus marinus (strain MIT 9313).